Reading from the N-terminus, the 224-residue chain is uncharacterized protein (224 aa).

The first 19 residues, 1-19, serve as a signal peptide directing secretion; the sequence is MLRHITFTVFITTSMNTLA.

The protein belongs to the periplasmic pilus chaperone family.

It localises to the periplasm. Could be required for the biogenesis of a putative fimbria. This is an uncharacterized protein from Escherichia coli (strain K12).